The primary structure comprises 127 residues: Large-conductance mechanosensitive channel (127 aa).

3 helical membrane-spanning segments follow: residues 19–39 (VGVI…TNII), 42–62 (LLGI…VGSA), and 67–87 (GAFI…FLLI).

Belongs to the MscL family. In terms of assembly, homopentamer.

It is found in the cell membrane. Its function is as follows. Channel that opens in response to stretch forces in the membrane lipid bilayer. May participate in the regulation of osmotic pressure changes within the cell. This is Large-conductance mechanosensitive channel from Levilactobacillus brevis (strain ATCC 367 / BCRC 12310 / CIP 105137 / JCM 1170 / LMG 11437 / NCIMB 947 / NCTC 947) (Lactobacillus brevis).